A 225-amino-acid polypeptide reads, in one-letter code: Small ribosomal subunit protein uS2 (225 aa).

Over residues 1 to 13 (MAEAKPALEKEAA) the composition is skewed to basic and acidic residues. The disordered stretch occupies residues 1 to 33 (MAEAKPALEKEAAVKTGSIPSESEDETASHKEG).

It belongs to the universal ribosomal protein uS2 family.

This is Small ribosomal subunit protein uS2 from Methanosarcina acetivorans (strain ATCC 35395 / DSM 2834 / JCM 12185 / C2A).